The primary structure comprises 341 residues: Fructose-1,6-bisphosphatase, cytosolic (341 aa).

Mg(2+)-binding residues include Glu-71, Glu-100, Asp-121, Leu-123, and Asp-124. Substrate-binding positions include 124–127 (DGCS), Asn-215, Tyr-247, Tyr-267, and Lys-277. Glu-283 lines the Mg(2+) pocket.

This sequence belongs to the FBPase class 1 family. Mg(2+) is required as a cofactor.

It is found in the cytoplasm. It catalyses the reaction beta-D-fructose 1,6-bisphosphate + H2O = beta-D-fructose 6-phosphate + phosphate. In Beta vulgaris (Sugar beet), this protein is Fructose-1,6-bisphosphatase, cytosolic.